We begin with the raw amino-acid sequence, 104 residues long: NADH-quinone oxidoreductase subunit K (104 aa).

A run of 3 helical transmembrane segments spans residues 4-24, 31-51, and 67-87; these read VPAS…LFGA, VIVL…LVAF, and LFTM…LIAL.

Belongs to the complex I subunit 4L family. As to quaternary structure, NDH-1 is composed of 14 different subunits. Subunits NuoA, H, J, K, L, M, N constitute the membrane sector of the complex.

It is found in the cell membrane. It catalyses the reaction a quinone + NADH + 5 H(+)(in) = a quinol + NAD(+) + 4 H(+)(out). Functionally, NDH-1 shuttles electrons from NADH, via FMN and iron-sulfur (Fe-S) centers, to quinones in the respiratory chain. The immediate electron acceptor for the enzyme in this species is believed to be a menaquinone. Couples the redox reaction to proton translocation (for every two electrons transferred, four hydrogen ions are translocated across the cytoplasmic membrane), and thus conserves the redox energy in a proton gradient. This Bacillus mycoides (strain KBAB4) (Bacillus weihenstephanensis) protein is NADH-quinone oxidoreductase subunit K.